A 303-amino-acid polypeptide reads, in one-letter code: UDP-3-O-acyl-N-acetylglucosamine deacetylase (303 aa).

Zn(2+) contacts are provided by histidine 78, histidine 237, and aspartate 241. Catalysis depends on histidine 264, which acts as the Proton donor.

Belongs to the LpxC family. The cofactor is Zn(2+).

It catalyses the reaction a UDP-3-O-[(3R)-3-hydroxyacyl]-N-acetyl-alpha-D-glucosamine + H2O = a UDP-3-O-[(3R)-3-hydroxyacyl]-alpha-D-glucosamine + acetate. The protein operates within glycolipid biosynthesis; lipid IV(A) biosynthesis; lipid IV(A) from (3R)-3-hydroxytetradecanoyl-[acyl-carrier-protein] and UDP-N-acetyl-alpha-D-glucosamine: step 2/6. Functionally, catalyzes the hydrolysis of UDP-3-O-myristoyl-N-acetylglucosamine to form UDP-3-O-myristoylglucosamine and acetate, the committed step in lipid A biosynthesis. The polypeptide is UDP-3-O-acyl-N-acetylglucosamine deacetylase (Cellvibrio japonicus (strain Ueda107) (Pseudomonas fluorescens subsp. cellulosa)).